The sequence spans 306 residues: Protein translocase subunit SecF (306 aa).

6 helical membrane-spanning segments follow: residues 17–37, 134–154, 158–178, 185–205, 232–254, and 268–288; these read AFAV…TKGI, GLGM…RFQW, LGAI…LSFF, TVLA…IVIF, LLRT…FFGG, and VMAG…WLNL.

It belongs to the SecD/SecF family. SecF subfamily. Forms a complex with SecD. Part of the essential Sec protein translocation apparatus which comprises SecA, SecYEG and auxiliary proteins SecDF-YajC and YidC.

The protein localises to the cell inner membrane. Functionally, part of the Sec protein translocase complex. Interacts with the SecYEG preprotein conducting channel. SecDF uses the proton motive force (PMF) to complete protein translocation after the ATP-dependent function of SecA. This is Protein translocase subunit SecF from Pseudomonas aeruginosa (strain ATCC 15692 / DSM 22644 / CIP 104116 / JCM 14847 / LMG 12228 / 1C / PRS 101 / PAO1).